A 353-amino-acid polypeptide reads, in one-letter code: Photosystem II protein D1 (353 aa).

The residue at position 2 (Thr-2) is an N-acetylthreonine. Position 2 is a phosphothreonine (Thr-2). 3 helical membrane-spanning segments follow: residues 29–46 (YIGWFGVLMIPTLLTATA), 118–133 (HFLLGVACYMGREWEL), and 142–156 (WIAVAYSAPVAAAAA). Chlorophyll a is bound at residue His-118. Tyr-126 contributes to the pheophytin a binding site. 2 residues coordinate [CaMn4O5] cluster: Asp-170 and Glu-189. Residues 197–218 (FHMLGVAGVFGGSLFSAMHGSL) form a helical membrane-spanning segment. His-198 serves as a coordination point for chlorophyll a. A quinone is bound by residues His-215 and 264–265 (SF). His-215 provides a ligand contact to Fe cation. His-272 is a Fe cation binding site. A helical transmembrane segment spans residues 274–288 (FLAAWPVVGIWFTAL). Residues His-332, Glu-333, Asp-342, and Ala-344 each contribute to the [CaMn4O5] cluster site. Residues 345–353 (SVEAPSVNG) constitute a propeptide that is removed on maturation.

This sequence belongs to the reaction center PufL/M/PsbA/D family. PSII is composed of 1 copy each of membrane proteins PsbA, PsbB, PsbC, PsbD, PsbE, PsbF, PsbH, PsbI, PsbJ, PsbK, PsbL, PsbM, PsbT, PsbX, PsbY, PsbZ, Psb30/Ycf12, at least 3 peripheral proteins of the oxygen-evolving complex and a large number of cofactors. It forms dimeric complexes. The D1/D2 heterodimer binds P680, chlorophylls that are the primary electron donor of PSII, and subsequent electron acceptors. It shares a non-heme iron and each subunit binds pheophytin, quinone, additional chlorophylls, carotenoids and lipids. D1 provides most of the ligands for the Mn4-Ca-O5 cluster of the oxygen-evolving complex (OEC). There is also a Cl(-1) ion associated with D1 and D2, which is required for oxygen evolution. The PSII complex binds additional chlorophylls, carotenoids and specific lipids. serves as cofactor. Post-translationally, tyr-161 forms a radical intermediate that is referred to as redox-active TyrZ, YZ or Y-Z. C-terminally processed by CTPA; processing is essential to allow assembly of the oxygen-evolving complex and thus photosynthetic growth.

It localises to the plastid. The protein resides in the chloroplast thylakoid membrane. The catalysed reaction is 2 a plastoquinone + 4 hnu + 2 H2O = 2 a plastoquinol + O2. Functionally, photosystem II (PSII) is a light-driven water:plastoquinone oxidoreductase that uses light energy to abstract electrons from H(2)O, generating O(2) and a proton gradient subsequently used for ATP formation. It consists of a core antenna complex that captures photons, and an electron transfer chain that converts photonic excitation into a charge separation. The D1/D2 (PsbA/PsbD) reaction center heterodimer binds P680, the primary electron donor of PSII as well as several subsequent electron acceptors. The polypeptide is Photosystem II protein D1 (Huperzia lucidula (Shining clubmoss)).